An 825-amino-acid polypeptide reads, in one-letter code: Endoglucanase C (825 aa).

The signal sequence occupies residues 1 to 28; that stretch reads MRNKLRRLLAIMMAVLLITSLFAPMVSA. E219 acts as the Proton donor in catalysis. The active-site Nucleophile is the E335. The segment covering 607–621 has biased composition (basic and acidic residues); sequence DRESVPEPVEHDTKG. Positions 607-635 are disordered; sequence DRESVPEPVEHDTKGDSALPSDFEDGTRQ.

This sequence belongs to the glycosyl hydrolase 5 (cellulase A) family.

The enzyme catalyses Endohydrolysis of (1-&gt;4)-beta-D-glucosidic linkages in cellulose, lichenin and cereal beta-D-glucans.. The protein is Endoglucanase C (celC) of Evansella cellulosilytica (strain ATCC 21833 / DSM 2522 / FERM P-1141 / JCM 9156 / N-4) (Bacillus cellulosilyticus).